The following is a 408-amino-acid chain: 3-hydroxy-3-methylglutaryl-coenzyme A reductase (408 aa).

Active-site charge relay system residues include Glu101 and Asp307. Catalysis depends on His403, which acts as the Proton donor.

It belongs to the HMG-CoA reductase family.

It catalyses the reaction (R)-mevalonate + 2 NADP(+) + CoA = (3S)-3-hydroxy-3-methylglutaryl-CoA + 2 NADPH + 2 H(+). The protein operates within metabolic intermediate biosynthesis; (R)-mevalonate biosynthesis; (R)-mevalonate from acetyl-CoA: step 3/3. Converts HMG-CoA to mevalonate. The polypeptide is 3-hydroxy-3-methylglutaryl-coenzyme A reductase (hmgA) (Pyrococcus abyssi (strain GE5 / Orsay)).